The primary structure comprises 108 residues: Putative pterin-4-alpha-carbinolamine dehydratase (108 aa).

The protein belongs to the pterin-4-alpha-carbinolamine dehydratase family.

It carries out the reaction (4aS,6R)-4a-hydroxy-L-erythro-5,6,7,8-tetrahydrobiopterin = (6R)-L-erythro-6,7-dihydrobiopterin + H2O. This Chromobacterium violaceum (strain ATCC 12472 / DSM 30191 / JCM 1249 / CCUG 213 / NBRC 12614 / NCIMB 9131 / NCTC 9757 / MK) protein is Putative pterin-4-alpha-carbinolamine dehydratase.